Consider the following 523-residue polypeptide: GMP synthase [glutamine-hydrolyzing] (523 aa).

The region spanning 8-205 is the Glutamine amidotransferase type-1 domain; sequence KILILDFGSQ…VVNICGCETK (198 aa). C85 (nucleophile) is an active-site residue. Residues H179 and E181 contribute to the active site. The GMPS ATP-PPase domain occupies 206–398; that stretch reads WTAENIIEDA…LGLPAEMINR (193 aa). 233–239 is an ATP binding site; sequence SGGVDSS.

In terms of assembly, homodimer.

It catalyses the reaction XMP + L-glutamine + ATP + H2O = GMP + L-glutamate + AMP + diphosphate + 2 H(+). It participates in purine metabolism; GMP biosynthesis; GMP from XMP (L-Gln route): step 1/1. Its function is as follows. Catalyzes the synthesis of GMP from XMP. The protein is GMP synthase [glutamine-hydrolyzing] of Haemophilus influenzae (strain PittEE).